The following is a 1057-amino-acid chain: Carbamoyl phosphate synthase large chain (1057 aa).

The carboxyphosphate synthetic domain stretch occupies residues 1 to 401 (MPKREDINKI…ATQKAIRSLD (401 aa)). ATP-binding residues include R129, R169, G175, G176, Q208, I210, E215, G241, I242, H243, Q284, and E298. The ATP-grasp 1 domain maps to 133–327 (RALMNDLNEP…IAKVAAKIAV (195 aa)). Mg(2+) is bound by residues Q284, E298, and N300. Mn(2+)-binding residues include Q284, E298, and N300. The interval 402–546 (IDINYIGDEE…YSTYELENES (145 aa)) is oligomerization domain. The carbamoyl phosphate synthetic domain stretch occupies residues 547 to 929 (IVSNRKSIVV…ALYKAFEGAK (383 aa)). Residues 671 to 861 (NKLIQANGIR…MARLATRAIL (191 aa)) form the ATP-grasp 2 domain. 10 residues coordinate ATP: R707, Q746, L748, E752, G777, V778, H779, S780, Q820, and E832. Residues Q820, E832, and N834 each coordinate Mg(2+). Q820, E832, and N834 together coordinate Mn(2+). An MGS-like domain is found at 930-1057 (MHMPDHGKVL…ESQAFTTLHL (128 aa)). An allosteric domain region spans residues 930–1057 (MHMPDHGKVL…ESQAFTTLHL (128 aa)).

Belongs to the CarB family. As to quaternary structure, composed of two chains; the small (or glutamine) chain promotes the hydrolysis of glutamine to ammonia, which is used by the large (or ammonia) chain to synthesize carbamoyl phosphate. Tetramer of heterodimers (alpha,beta)4. Mg(2+) serves as cofactor. Mn(2+) is required as a cofactor.

The enzyme catalyses hydrogencarbonate + L-glutamine + 2 ATP + H2O = carbamoyl phosphate + L-glutamate + 2 ADP + phosphate + 2 H(+). The catalysed reaction is hydrogencarbonate + NH4(+) + 2 ATP = carbamoyl phosphate + 2 ADP + phosphate + 2 H(+). It functions in the pathway amino-acid biosynthesis; L-arginine biosynthesis; carbamoyl phosphate from bicarbonate: step 1/1. Its pathway is pyrimidine metabolism; UMP biosynthesis via de novo pathway; (S)-dihydroorotate from bicarbonate: step 1/3. Functionally, large subunit of the glutamine-dependent carbamoyl phosphate synthetase (CPSase). CPSase catalyzes the formation of carbamoyl phosphate from the ammonia moiety of glutamine, carbonate, and phosphate donated by ATP, constituting the first step of 2 biosynthetic pathways, one leading to arginine and/or urea and the other to pyrimidine nucleotides. The large subunit (synthetase) binds the substrates ammonia (free or transferred from glutamine from the small subunit), hydrogencarbonate and ATP and carries out an ATP-coupled ligase reaction, activating hydrogencarbonate by forming carboxy phosphate which reacts with ammonia to form carbamoyl phosphate. The sequence is that of Carbamoyl phosphate synthase large chain from Pediococcus pentosaceus (strain ATCC 25745 / CCUG 21536 / LMG 10740 / 183-1w).